We begin with the raw amino-acid sequence, 517 residues long: Crotonobetaine/carnitine--CoA ligase (517 aa).

This sequence belongs to the ATP-dependent AMP-binding enzyme family.

It carries out the reaction 4-(trimethylamino)butanoate + ATP + CoA = 4-(trimethylamino)butanoyl-CoA + AMP + diphosphate. It catalyses the reaction crotonobetaine + ATP + CoA = crotonobetainyl-CoA + AMP + diphosphate. The enzyme catalyses (R)-carnitine + ATP + CoA = (R)-carnitinyl-CoA + AMP + diphosphate. It participates in amine and polyamine metabolism; carnitine metabolism. Functionally, catalyzes the transfer of CoA to carnitine, generating the initial carnitinyl-CoA needed for the CaiB reaction cycle. Also has activity toward crotonobetaine and gamma-butyrobetaine. The chain is Crotonobetaine/carnitine--CoA ligase from Escherichia coli O139:H28 (strain E24377A / ETEC).